A 547-amino-acid polypeptide reads, in one-letter code: RING finger protein ETP1 homolog (547 aa).

The RING-type zinc-finger motif lies at cysteine 208–arginine 248. Residues proline 245–glycine 338 form a UBP-type; degenerate zinc finger. The Zn(2+) site is built by cysteine 262, cysteine 265, cysteine 274, cysteine 277, cysteine 282, histidine 289, histidine 293, and histidine 299. Residues leucine 514–asparagine 523 show a composition bias toward polar residues. Residues leucine 514–aspartate 547 are disordered. The segment covering lysine 526 to proline 535 has biased composition (basic residues).

The protein localises to the cytoplasm. Its function is as follows. May act as a cytoplasmic retention protein with a role in regulating nuclear transport. This is RING finger protein ETP1 homolog from Schizosaccharomyces pombe (strain 972 / ATCC 24843) (Fission yeast).